A 538-amino-acid chain; its full sequence is CTP synthase (538 aa).

The interval 1–265 is amidoligase domain; it reads MARYIFVTGG…DLQVLNYFKL (265 aa). Ser13 is a CTP binding site. Residue Ser13 coordinates UTP. ATP is bound by residues 14 to 19 and Asp71; that span reads SLGKGL. Mg(2+) contacts are provided by Asp71 and Glu139. CTP is bound by residues 146 to 148, 186 to 191, and Lys222; these read DIE and KTKPTQ. UTP is bound by residues 186–191 and Lys222; that span reads KTKPTQ. A Glutamine amidotransferase type-1 domain is found at 291 to 538; it reads NIAIIGKYVE…SFIKAAKNHK (248 aa). Gly353 contributes to the L-glutamine binding site. Residue Cys380 is the Nucleophile; for glutamine hydrolysis of the active site. L-glutamine is bound by residues 381 to 384, Glu404, and Arg468; that span reads YGMQ. Residues His513 and Glu515 contribute to the active site.

It belongs to the CTP synthase family. As to quaternary structure, homotetramer.

It catalyses the reaction UTP + L-glutamine + ATP + H2O = CTP + L-glutamate + ADP + phosphate + 2 H(+). The enzyme catalyses L-glutamine + H2O = L-glutamate + NH4(+). It carries out the reaction UTP + NH4(+) + ATP = CTP + ADP + phosphate + 2 H(+). Its pathway is pyrimidine metabolism; CTP biosynthesis via de novo pathway; CTP from UDP: step 2/2. With respect to regulation, allosterically activated by GTP, when glutamine is the substrate; GTP has no effect on the reaction when ammonia is the substrate. The allosteric effector GTP functions by stabilizing the protein conformation that binds the tetrahedral intermediate(s) formed during glutamine hydrolysis. Inhibited by the product CTP, via allosteric rather than competitive inhibition. In terms of biological role, catalyzes the ATP-dependent amination of UTP to CTP with either L-glutamine or ammonia as the source of nitrogen. Regulates intracellular CTP levels through interactions with the four ribonucleotide triphosphates. The polypeptide is CTP synthase (Pelagibacter ubique (strain HTCC1062)).